We begin with the raw amino-acid sequence, 80 residues long: Protein YibX (80 aa).

This Escherichia coli (strain K12) protein is Protein YibX.